Consider the following 530-residue polypeptide: AP-4 complex subunit mu (530 aa).

Positions 164-187 (PKQGVKPIHSGSKNSSSGGSSLST) are disordered. Residues 173–186 (SGSKNSSSGGSSLS) show a composition bias toward low complexity. The region spanning 227-527 (DNEIYIDLCE…ITDSKSFVSR (301 aa)) is the MHD domain.

The protein belongs to the adaptor complexes medium subunit family. As to quaternary structure, may be part of the adaptor protein complex 4 (AP-4), a heterotetramer composed of two large adaptins (epsilon-type subunitand beta-type subunit), a medium adaptin (mu-type subunit) and a small adaptin (sigma-type).

The protein resides in the golgi apparatus. It is found in the trans-Golgi network membrane. The protein localises to the early endosome. In terms of biological role, probable component of an adaptor protein complex. Adaptor protein complexes are vesicle coat components involved both in vesicle formation and cargo selection. They control the vesicular transport of proteins in different trafficking pathways. The sequence is that of AP-4 complex subunit mu (apm4) from Dictyostelium discoideum (Social amoeba).